A 356-amino-acid chain; its full sequence is Trifolitoxin operon protein TfxC (356 aa).

This chain is Trifolitoxin operon protein TfxC (tfxC), found in Rhizobium leguminosarum bv. trifolii.